We begin with the raw amino-acid sequence, 102 residues long: uncharacterized protein (102 aa).

Residues 1-102 form a disordered region; sequence MPVEQDGLTG…LANIREQNHQ (102 aa).

This is an uncharacterized protein from Caenorhabditis elegans.